Here is a 197-residue protein sequence, read N- to C-terminus: Holliday junction branch migration complex subunit RuvA (197 aa).

Residues 1–64 (MIGRLRGIVA…EDSVSLYGFL (64 aa)) are domain I. Residues 65–143 (REGERRLFRD…QFGAGGALPT (79 aa)) are domain II. The flexible linker stretch occupies residues 144-153 (GSGPAPADPL). The tract at residues 153 to 197 (LSDATVALQQLGYKPAEAARMAREAFNEGDEVAIVIRKALQSALR) is domain III.

The protein belongs to the RuvA family. In terms of assembly, homotetramer. Forms an RuvA(8)-RuvB(12)-Holliday junction (HJ) complex. HJ DNA is sandwiched between 2 RuvA tetramers; dsDNA enters through RuvA and exits via RuvB. An RuvB hexamer assembles on each DNA strand where it exits the tetramer. Each RuvB hexamer is contacted by two RuvA subunits (via domain III) on 2 adjacent RuvB subunits; this complex drives branch migration. In the full resolvosome a probable DNA-RuvA(4)-RuvB(12)-RuvC(2) complex forms which resolves the HJ.

Its subcellular location is the cytoplasm. The RuvA-RuvB-RuvC complex processes Holliday junction (HJ) DNA during genetic recombination and DNA repair, while the RuvA-RuvB complex plays an important role in the rescue of blocked DNA replication forks via replication fork reversal (RFR). RuvA specifically binds to HJ cruciform DNA, conferring on it an open structure. The RuvB hexamer acts as an ATP-dependent pump, pulling dsDNA into and through the RuvAB complex. HJ branch migration allows RuvC to scan DNA until it finds its consensus sequence, where it cleaves and resolves the cruciform DNA. This is Holliday junction branch migration complex subunit RuvA from Stenotrophomonas maltophilia (strain R551-3).